Reading from the N-terminus, the 334-residue chain is Methylthioribose-1-phosphate isomerase (334 aa).

Residues 44–46 (RGA), arginine 87, and glutamine 192 contribute to the substrate site. Aspartate 233 serves as the catalytic Proton donor. A substrate-binding site is contributed by 243-244 (NK).

Belongs to the eIF-2B alpha/beta/delta subunits family. MtnA subfamily.

The catalysed reaction is 5-(methylsulfanyl)-alpha-D-ribose 1-phosphate = 5-(methylsulfanyl)-D-ribulose 1-phosphate. It participates in amino-acid biosynthesis; L-methionine biosynthesis via salvage pathway; L-methionine from S-methyl-5-thio-alpha-D-ribose 1-phosphate: step 1/6. Catalyzes the interconversion of methylthioribose-1-phosphate (MTR-1-P) into methylthioribulose-1-phosphate (MTRu-1-P). The polypeptide is Methylthioribose-1-phosphate isomerase (Dehalococcoides mccartyi (strain ATCC BAA-2266 / KCTC 15142 / 195) (Dehalococcoides ethenogenes (strain 195))).